The chain runs to 541 residues: Tyrosine-protein kinase Yes (541 aa).

Over residues 1–20 (MGCIKSKEDKGPAMKYRTDN) the composition is skewed to basic and acidic residues. Residues 1 to 43 (MGCIKSKEDKGPAMKYRTDNTPEPISSHVSHYGSDSSQATQSP) form a disordered region. Gly-2 carries the N-myristoyl glycine lipid modification. A lipid anchor (S-palmitoyl cysteine; in membrane form) is attached at Cys-3. Residues 26–37 (SSHVSHYGSDSS) show a composition bias toward low complexity. Positions 89 to 150 (GGVTVFVALY…PSNYVAPADS (62 aa)) constitute an SH3 domain. Positions 156 to 253 (WYFGKMGRKD…GLCHKLTTVC (98 aa)) constitute an SH2 domain. A Protein kinase domain is found at 275–528 (LRLEVKLGQG…YIQSFLEDYF (254 aa)). ATP contacts are provided by residues 281–289 (LGQGCFGEV) and Lys-303. Residue Asp-394 is the Proton acceptor of the active site. Tyr-424 bears the Phosphotyrosine; by autocatalysis mark. Position 535 is a phosphotyrosine; by CSK (Tyr-535).

It belongs to the protein kinase superfamily. Tyr protein kinase family. SRC subfamily. In terms of processing, autophosphorylation at Tyr-424 maintains enzyme activity. Palmitoylation at Cys-3 promotes membrane localization.

The protein resides in the cell membrane. The protein localises to the cytoplasm. It localises to the cytoskeleton. It is found in the microtubule organizing center. Its subcellular location is the centrosome. The protein resides in the cytosol. The protein localises to the cell junction. The catalysed reaction is L-tyrosyl-[protein] + ATP = O-phospho-L-tyrosyl-[protein] + ADP + H(+). In terms of biological role, non-receptor protein tyrosine kinase that is involved in the regulation of cell growth and survival, apoptosis, cell-cell adhesion, cytoskeleton remodeling, differentiation, G2/M progression and cytokinesis. This Gallus gallus (Chicken) protein is Tyrosine-protein kinase Yes (YES1).